Reading from the N-terminus, the 363-residue chain is 3-dehydroquinate synthase (363 aa).

Residues 75 to 80 (DAEEGK), 109 to 113 (GAVTD), 133 to 134 (TS), Lys146, Lys155, and 173 to 176 (TLDT) each bind NAD(+). Zn(2+) is bound by residues Glu188, His251, and His267.

It belongs to the sugar phosphate cyclases superfamily. Dehydroquinate synthase family. The cofactor is Co(2+). Zn(2+) serves as cofactor. NAD(+) is required as a cofactor.

The protein localises to the cytoplasm. It carries out the reaction 7-phospho-2-dehydro-3-deoxy-D-arabino-heptonate = 3-dehydroquinate + phosphate. The protein operates within metabolic intermediate biosynthesis; chorismate biosynthesis; chorismate from D-erythrose 4-phosphate and phosphoenolpyruvate: step 2/7. Its function is as follows. Catalyzes the conversion of 3-deoxy-D-arabino-heptulosonate 7-phosphate (DAHP) to dehydroquinate (DHQ). In Pseudarthrobacter chlorophenolicus (strain ATCC 700700 / DSM 12829 / CIP 107037 / JCM 12360 / KCTC 9906 / NCIMB 13794 / A6) (Arthrobacter chlorophenolicus), this protein is 3-dehydroquinate synthase.